The following is a 974-amino-acid chain: Phosphoenolpyruvate carboxylase 1 (974 aa).

Active-site residues include His164 and Lys604.

It belongs to the PEPCase type 1 family. As to quaternary structure, exists as a homotetramer or heterooligomer. Mg(2+) serves as cofactor.

Its subcellular location is the cytoplasm. The enzyme catalyses oxaloacetate + phosphate = phosphoenolpyruvate + hydrogencarbonate. With respect to regulation, activated by glutamine and dihydroxyacetone phosphate. Inhibited by glutamate, aspartate, 2-oxoglutarate and malate. Through the carboxylation of phosphoenolpyruvate (PEP) it forms oxaloacetate, a four-carbon dicarboxylic acid source for the tricarboxylic acid cycle. The polypeptide is Phosphoenolpyruvate carboxylase 1 (Chlamydomonas reinhardtii (Chlamydomonas smithii)).